A 657-amino-acid chain; its full sequence is Pentatricopeptide repeat-containing protein CRR2, chloroplastic (657 aa).

The N-terminal 51 residues, 1-51 (MFLSHPPQVIQPTYHTVNFLPRSPLKPPSCSVALNNPSISSGAGAKISNNQ), are a transit peptide targeting the chloroplast. PPR repeat units follow at residues 45–75 (AKIS…ESSP), 76–110 (SQQT…GSDQ), 111–141 (DPFL…TRKR), 142–176 (TIYV…GVES), 177–215 (DRFT…GYSS), 216–246 (HVYI…MPVR), 247–277 (NVVS…MMRE), 284–318 (NSVT…GLDS), 319–349 (ILPV…MHDR), 350–384 (DVVS…GASP), 385–420 (TPVT…GIKP), and 421–451 (QIEH…MRTE). The interval 456–531 (VWGSLLGSCR…LPGRCWMEVR (76 aa)) is type E motif. The tract at residues 532–562 (RKMYSFVSVDEFNPLMEQIHAFLVKLAEDMK) is type E(+) motif. Residues 563 to 657 (EKGYIPQTKG…NGVCSCGDYW (95 aa)) are type DYW motif.

It belongs to the PPR family. PCMP-H subfamily.

The protein localises to the plastid. It is found in the chloroplast. In terms of biological role, required for the intergenic processing between chloroplast rsp7 and ndhB transcripts. Necessary for chloroplast NADH dehydrogenase-like (NDH) complex-dependent cyclic electron transport around PSI (CET). This chain is Pentatricopeptide repeat-containing protein CRR2, chloroplastic, found in Arabidopsis thaliana (Mouse-ear cress).